The following is a 668-amino-acid chain: UvrABC system protein B (668 aa).

The Helicase ATP-binding domain occupies 31–188 (HGIEAGEKAQ…RKLVNIQFER (158 aa)). 44 to 51 (GATGTGKT) lines the ATP pocket. The Beta-hairpin motif lies at 97–120 (YYDYYQPEAYVPSSDTYIEKDSSI). Positions 435-601 (QMDDLVGEIN…TIIKPIRDLI (167 aa)) constitute a Helicase C-terminal domain. One can recognise a UVR domain in the interval 630–665 (EKLIARLEDEMRAAAKKLDFEQAASLRDTIMDMKTE).

Belongs to the UvrB family. As to quaternary structure, forms a heterotetramer with UvrA during the search for lesions. Interacts with UvrC in an incision complex.

Its subcellular location is the cytoplasm. In terms of biological role, the UvrABC repair system catalyzes the recognition and processing of DNA lesions. A damage recognition complex composed of 2 UvrA and 2 UvrB subunits scans DNA for abnormalities. Upon binding of the UvrA(2)B(2) complex to a putative damaged site, the DNA wraps around one UvrB monomer. DNA wrap is dependent on ATP binding by UvrB and probably causes local melting of the DNA helix, facilitating insertion of UvrB beta-hairpin between the DNA strands. Then UvrB probes one DNA strand for the presence of a lesion. If a lesion is found the UvrA subunits dissociate and the UvrB-DNA preincision complex is formed. This complex is subsequently bound by UvrC and the second UvrB is released. If no lesion is found, the DNA wraps around the other UvrB subunit that will check the other stand for damage. This chain is UvrABC system protein B, found in Levilactobacillus brevis (strain ATCC 367 / BCRC 12310 / CIP 105137 / JCM 1170 / LMG 11437 / NCIMB 947 / NCTC 947) (Lactobacillus brevis).